A 236-amino-acid polypeptide reads, in one-letter code: 2-phospho-L-lactate guanylyltransferase (236 aa).

The protein belongs to the CofC family. As to quaternary structure, homodimer.

The catalysed reaction is (2S)-2-phospholactate + GTP + H(+) = (2S)-lactyl-2-diphospho-5'-guanosine + diphosphate. It participates in cofactor biosynthesis; coenzyme F420 biosynthesis. Guanylyltransferase that catalyzes the activation of (2S)-2-phospholactate (2-PL) as (2S)-lactyl-2-diphospho-5'-guanosine, via the condensation of 2-PL with GTP. It is involved in the biosynthesis of coenzyme F420, a hydride carrier cofactor. In Natrialba magadii (strain ATCC 43099 / DSM 3394 / CCM 3739 / CIP 104546 / IAM 13178 / JCM 8861 / NBRC 102185 / NCIMB 2190 / MS3) (Natronobacterium magadii), this protein is 2-phospho-L-lactate guanylyltransferase.